The sequence spans 805 residues: Transmembrane channel-like protein 6 (805 aa).

The interval Met-1–Glu-29 is disordered. At Met-1–Cys-209 the chain is on the lumenal side. Thr-89 is modified (phosphothreonine). Omega-N-methylarginine is present on Arg-94. Asn-103 is a glycosylation site (N-linked (GlcNAc...) asparagine). Thr-105 is modified (phosphothreonine). Residues Val-210–Trp-230 form a helical membrane-spanning segment. Residues Arg-231–Phe-249 lie on the Cytoplasmic side of the membrane. A helical membrane pass occupies residues Leu-250–Ile-270. Over Met-271–Asn-338 the chain is Lumenal. An N-linked (GlcNAc...) asparagine glycan is attached at Asn-312. Residues Met-339–Val-359 form a helical membrane-spanning segment. Over Tyr-360 to Ala-431 the chain is Cytoplasmic. A helical transmembrane segment spans residues Ala-432–Val-452. Over His-453–Glu-469 the chain is Lumenal. Residues Ala-470 to Cys-490 traverse the membrane as a helical segment. At Arg-491–Glu-505 the chain is on the cytoplasmic side. A helical membrane pass occupies residues Val-506–Tyr-526. Over His-527–Leu-553 the chain is Lumenal. A helical membrane pass occupies residues Val-554–Ile-574. Topologically, residues Ser-575 to Trp-604 are cytoplasmic. Residues Leu-605 to Phe-625 traverse the membrane as a helical segment. Over Tyr-626–Thr-650 the chain is Lumenal. Residues Val-651–Ala-671 form a helical membrane-spanning segment. Residues Val-672–Thr-722 lie on the Cytoplasmic side of the membrane. Residues Phe-723 to Val-743 traverse the membrane as a helical segment. The Lumenal portion of the chain corresponds to Arg-744–Ala-805. The segment at Lys-778–Ala-805 is disordered.

Belongs to the TMC family. As to quaternary structure, interacts with TMC8. Interacts and forms a complex with TMC8 and CIB1; the interaction stabilizes each component of the complex. Interacts and forms a complex with TMC8 and SLC30A1/ZNT1; the interaction regulates zinc transport into the ER. (Microbial infection) Interacts with human papillomavirus 16/HPV16 protein E5; the interaction alleviates TMC6-mediated transcription factors inhibition. As to expression, expressed in placenta, prostate, testis, activated T-lymphocytes and lymphokine-activated killer (LAK) lymphocytes.

Its subcellular location is the endoplasmic reticulum membrane. It localises to the golgi apparatus membrane. The protein resides in the nucleus membrane. Its function is as follows. Acts as a regulatory protein involved in the regulation of numerous cellular processes. Together with its homolog TMC8/EVER2, forms a complex with CIB1 in lymphocytes and keratynocytes where TMC6 and TMC8 stabilize CIB1 and reciprocally. Together with TMC8, also forms a complex with and activates zinc transporter ZNT1 at the ER membrane of keratynocytes, thereby facilitating zinc uptake into the ER. Down-regulates the activity of transcription factors induced by zinc and cytokines. Also plays a role in thermal sensation by inhibiting the M-channel (KCNQ2-KCNQ3 channel) current in primary sensory neurons. This is Transmembrane channel-like protein 6 from Homo sapiens (Human).